We begin with the raw amino-acid sequence, 327 residues long: Zinc transport protein ZntB (327 aa).

Residues 1-273 lie on the Cytoplasmic side of the membrane; sequence MEAIKGSDVN…ARRTYTMSLM (273 aa). The helical transmembrane segment at 274 to 294 threads the bilayer; it reads AMVFLPSTFLTGLFGVNLGGI. Residues 295–300 lie on the Periplasmic side of the membrane; that stretch reads PGGGWR. A helical membrane pass occupies residues 301–321; the sequence is FGFSLFCILLVVLIGGVTLWL. Residues 322-327 are Cytoplasmic-facing; that stretch reads HRSKWL.

It belongs to the CorA metal ion transporter (MIT) (TC 1.A.35) family.

The protein localises to the cell inner membrane. It catalyses the reaction Zn(2+)(out) + H(+)(out) = Zn(2+)(in) + H(+)(in). Zinc transporter. Acts as a Zn(2+):proton symporter, which likely mediates zinc ion uptake. This Salmonella choleraesuis (strain SC-B67) protein is Zinc transport protein ZntB.